A 40-amino-acid polypeptide reads, in one-letter code: U4-ctenitoxin-Co1c (40 aa).

4 cysteine pairs are disulfide-bonded: Cys-3/Cys-20, Cys-10/Cys-26, Cys-19/Cys-40, and Cys-28/Cys-38.

As to expression, expressed by the venom gland.

Its subcellular location is the secreted. In terms of biological role, not toxic to mice by intracerebroventricular injection. This is U4-ctenitoxin-Co1c from Ctenus ornatus (Brazilian spider).